Consider the following 149-residue polypeptide: Endoribonuclease YbeY (149 aa).

His-113, His-117, and His-123 together coordinate Zn(2+).

Belongs to the endoribonuclease YbeY family. Zn(2+) is required as a cofactor.

The protein resides in the cytoplasm. Single strand-specific metallo-endoribonuclease involved in late-stage 70S ribosome quality control and in maturation of the 3' terminus of the 16S rRNA. This chain is Endoribonuclease YbeY, found in Saccharophagus degradans (strain 2-40 / ATCC 43961 / DSM 17024).